The sequence spans 324 residues: tRNA pseudouridine synthase B (324 aa).

The active-site Nucleophile is D49.

The protein belongs to the pseudouridine synthase TruB family. Type 1 subfamily.

It carries out the reaction uridine(55) in tRNA = pseudouridine(55) in tRNA. Responsible for synthesis of pseudouridine from uracil-55 in the psi GC loop of transfer RNAs. The polypeptide is tRNA pseudouridine synthase B (Tolumonas auensis (strain DSM 9187 / NBRC 110442 / TA 4)).